The primary structure comprises 432 residues: Glutamyl-tRNA reductase (432 aa).

Substrate is bound by residues 49-52 (TCNR), Ser-101, 106-108 (EPQ), and Gln-112. The active-site Nucleophile is the Cys-50. 181 to 186 (GAGETI) is a binding site for NADP(+). A disordered region spans residues 407-432 (FPEKPGYQHPPIATPIVRTDDADPAP).

It belongs to the glutamyl-tRNA reductase family. Homodimer.

It catalyses the reaction (S)-4-amino-5-oxopentanoate + tRNA(Glu) + NADP(+) = L-glutamyl-tRNA(Glu) + NADPH + H(+). It participates in porphyrin-containing compound metabolism; protoporphyrin-IX biosynthesis; 5-aminolevulinate from L-glutamyl-tRNA(Glu): step 1/2. Its function is as follows. Catalyzes the NADPH-dependent reduction of glutamyl-tRNA(Glu) to glutamate 1-semialdehyde (GSA). The sequence is that of Glutamyl-tRNA reductase from Xanthomonas oryzae pv. oryzae (strain PXO99A).